Reading from the N-terminus, the 293-residue chain is MATH domain and coiled-coil domain-containing protein At3g58400 (293 aa).

One can recognise an MATH domain in the interval 3–126 (RSRSQNLITE…NGELKIVAEI (124 aa)). Positions 227–285 (KLDWLENKLYEVAQKKEDDEAGETRLREMEEKLKDLKLKCSKMEALVEEEKAKVSAAKA) form a coiled coil.

The polypeptide is MATH domain and coiled-coil domain-containing protein At3g58400 (Arabidopsis thaliana (Mouse-ear cress)).